Reading from the N-terminus, the 419-residue chain is Serine hydroxymethyltransferase (419 aa).

(6S)-5,6,7,8-tetrahydrofolate is bound by residues L118 and 122–124 (GHL). An N6-(pyridoxal phosphate)lysine modification is found at K227.

The protein belongs to the SHMT family. In terms of assembly, homodimer. The cofactor is pyridoxal 5'-phosphate.

Its subcellular location is the cytoplasm. The enzyme catalyses (6R)-5,10-methylene-5,6,7,8-tetrahydrofolate + glycine + H2O = (6S)-5,6,7,8-tetrahydrofolate + L-serine. It participates in one-carbon metabolism; tetrahydrofolate interconversion. Its pathway is amino-acid biosynthesis; glycine biosynthesis; glycine from L-serine: step 1/1. In terms of biological role, catalyzes the reversible interconversion of serine and glycine with tetrahydrofolate (THF) serving as the one-carbon carrier. This reaction serves as the major source of one-carbon groups required for the biosynthesis of purines, thymidylate, methionine, and other important biomolecules. Also exhibits THF-independent aldolase activity toward beta-hydroxyamino acids, producing glycine and aldehydes, via a retro-aldol mechanism. The chain is Serine hydroxymethyltransferase from Chloroflexus aurantiacus (strain ATCC 29364 / DSM 637 / Y-400-fl).